Here is a 360-residue protein sequence, read N- to C-terminus: A-type ATP synthase subunit C (360 aa).

The tract at residues 1 to 25 (MRLLEKLWGQKPSRKSDKKKNGTSN) is disordered.

Belongs to the V-ATPase V0D/AC39 subunit family. As to quaternary structure, has multiple subunits with at least A(3), B(3), C, D, E, F, H, I and proteolipid K(x).

Its subcellular location is the cell membrane. Component of the A-type ATP synthase that produces ATP from ADP in the presence of a proton gradient across the membrane. The protein is A-type ATP synthase subunit C of Methanosarcina barkeri (strain Fusaro / DSM 804).